The sequence spans 511 residues: Exodeoxyribonuclease 7 large subunit (511 aa).

It belongs to the XseA family. Heterooligomer composed of large and small subunits.

Its subcellular location is the cytoplasm. The catalysed reaction is Exonucleolytic cleavage in either 5'- to 3'- or 3'- to 5'-direction to yield nucleoside 5'-phosphates.. Functionally, bidirectionally degrades single-stranded DNA into large acid-insoluble oligonucleotides, which are then degraded further into small acid-soluble oligonucleotides. In Brucella suis (strain ATCC 23445 / NCTC 10510), this protein is Exodeoxyribonuclease 7 large subunit.